The chain runs to 686 residues: Chondroitin proteoglycan 1 (686 aa).

The first 18 residues, 1-18 (MLPKSVLIVAFLVASSSA), serve as a signal peptide directing secretion. N-linked (GlcNAc...) asparagine glycosylation is present at Asn-46. A Chitin-binding type-2 1 domain is found at 63-120 (DTDCSTKEDGLYAIGGCSPQFLTCSGGIARIMDCPANLIYDQRIIACEYSYNVPECSG). A disulfide bond links Cys-96 and Cys-109. An N-linked (GlcNAc...) asparagine glycan is attached at Asn-143. The region spanning 228–285 (DKTCNGKADGFYSFGQCSDHYIACSNGYTIPMQCPARLSFDEARVICDYTMNVPECQN) is the Chitin-binding type-2 2 domain. A disulfide bond links Cys-261 and Cys-274. Residues 284–312 (QNGSGNYEGSAEETTTEASGELPYSNGYG) form a disordered region. N-linked (GlcNAc...) asparagine glycosylation is found at Asn-285, Asn-635, and Asn-664. Residues 658-686 (KLRSATNRTSTKEATTRTQNMHAHYHRNH) are disordered.

Functionally, required for polar body extrusion during cytokinesis in embryo development. Affects cortical granule size. Shown to have roles in meiotic chromosome segregation, osmotic barrier function and polarization in conjunction with cpg-2. Binds chitin. In Caenorhabditis briggsae, this protein is Chondroitin proteoglycan 1 (cpg-1).